Reading from the N-terminus, the 154-residue chain is Superoxide dismutase [Cu-Zn] (154 aa).

The Cu cation site is built by His47 and His64. The cysteines at positions 58 and 147 are disulfide-linked. His64, His72, His81, and Asp84 together coordinate Zn(2+). Cu cation is bound at residue His121. Arg144 is a substrate binding site.

It belongs to the Cu-Zn superoxide dismutase family. In terms of assembly, homodimer. It depends on Cu cation as a cofactor. Requires Zn(2+) as cofactor.

The protein localises to the cytoplasm. The enzyme catalyses 2 superoxide + 2 H(+) = H2O2 + O2. Destroys radicals which are normally produced within the cells and which are toxic to biological systems. In Pleurocordyceps sinensis (Polycephalomyces sinensis), this protein is Superoxide dismutase [Cu-Zn] (SOD1).